The chain runs to 102 residues: Large ribosomal subunit protein bL21 (102 aa).

The protein belongs to the bacterial ribosomal protein bL21 family. Part of the 50S ribosomal subunit. Contacts protein L20.

Functionally, this protein binds to 23S rRNA in the presence of protein L20. The polypeptide is Large ribosomal subunit protein bL21 (Cytophaga hutchinsonii (strain ATCC 33406 / DSM 1761 / CIP 103989 / NBRC 15051 / NCIMB 9469 / D465)).